The chain runs to 477 residues: Tail sheath protein (477 aa).

Belongs to the myoviridae tail sheath protein family. In terms of assembly, homomultimer.

The protein resides in the virion. It localises to the host cytoplasm. Polymerizes as an extended structure around the baseplate-tail tube complex. During ejection, the sheath shifts to a contracted form, thereby making the inner tail tube protrude through the host cell envelope. The polypeptide is Tail sheath protein (Burkholderia phage BcepMu (isolate -/United States/Summer/2002) (Bacteriophage BcepMu)).